The chain runs to 344 residues: Phosphate acyltransferase (344 aa).

It belongs to the PlsX family. As to quaternary structure, homodimer. Probably interacts with PlsY.

The protein resides in the cytoplasm. The enzyme catalyses a fatty acyl-[ACP] + phosphate = an acyl phosphate + holo-[ACP]. It participates in lipid metabolism; phospholipid metabolism. In terms of biological role, catalyzes the reversible formation of acyl-phosphate (acyl-PO(4)) from acyl-[acyl-carrier-protein] (acyl-ACP). This enzyme utilizes acyl-ACP as fatty acyl donor, but not acyl-CoA. The polypeptide is Phosphate acyltransferase (Sodalis glossinidius (strain morsitans)).